The following is a 212-amino-acid chain: Ras-related protein Rab-43 (212 aa).

25-32 provides a ligand contact to GTP; the sequence is GDASVGKT. Positions 47-55 match the Effector region motif; the sequence is QGSTIGVDF. Position 49 is a phosphoserine (serine 49). 73–77 is a binding site for GTP; it reads DTAGQ. A Phosphothreonine; by LRRK2 modification is found at threonine 82. GTP-binding positions include 131-134 and 163-164; these read NKSD and AK. Serine 193 is subject to Phosphoserine. 2 S-geranylgeranyl cysteine lipidation sites follow: cysteine 210 and cysteine 212. The residue at position 212 (cysteine 212) is a Cysteine methyl ester.

The protein belongs to the small GTPase superfamily. Rab family. As to quaternary structure, interacts with GDI1, GDI2, CHM and CHML; phosphorylation at Thr-82 disrupts these interactions. Widely expressed in brain, testis, lung, heart, ovary, colon, kidney, uterus and spleen but not in liver.

It is found in the cytoplasmic vesicle. Its subcellular location is the phagosome. The protein resides in the phagosome membrane. It localises to the golgi apparatus. The protein localises to the trans-Golgi network membrane. It is found in the trans-Golgi network. Its function is as follows. The small GTPases Rab are key regulators of intracellular membrane trafficking, from the formation of transport vesicles to their fusion with membranes. Rabs cycle between an inactive GDP-bound form and an active GTP-bound form that is able to recruit to membranes different set of downstream effectors directly responsible for vesicle formation, movement, tethering and fusion. The low intrinsic GTPase activity of RAB43 is activated by USP6NL. Involved in retrograde transport from the endocytic pathway to the Golgi apparatus. Involved in the transport of Shiga toxin from early and recycling endosomes to the trans-Golgi network. Required for the structural integrity of the Golgi complex. Plays a role in the maturation of phagosomes that engulf pathogens, such as S.aureus and M.tuberculosis. The polypeptide is Ras-related protein Rab-43 (RAB43) (Homo sapiens (Human)).